Reading from the N-terminus, the 420-residue chain is Methionine aminopeptidase 2 (420 aa).

A disordered region spans residues 1–48; it reads MSDAIAKDAVNTSSEKEPVSATPELKTSGSPDAAVSSGDKKKKKKKKK. H172 is a binding site for substrate. A divalent metal cation-binding residues include D192, D203, and H272. Substrate is bound at residue H280. Positions 305 and 401 each coordinate a divalent metal cation.

It belongs to the peptidase M24A family. Methionine aminopeptidase eukaryotic type 2 subfamily. Requires Co(2+) as cofactor. Zn(2+) is required as a cofactor. Mn(2+) serves as cofactor. The cofactor is Fe(2+).

It is found in the cytoplasm. It carries out the reaction Release of N-terminal amino acids, preferentially methionine, from peptides and arylamides.. Functionally, cotranslationally removes the N-terminal methionine from nascent proteins. The N-terminal methionine is often cleaved when the second residue in the primary sequence is small and uncharged (Met-Ala-, Cys, Gly, Pro, Ser, Thr, or Val). The chain is Methionine aminopeptidase 2 from Lachancea thermotolerans (strain ATCC 56472 / CBS 6340 / NRRL Y-8284) (Yeast).